Reading from the N-terminus, the 202-residue chain is Small ribosomal subunit protein uS4 (202 aa).

The disordered stretch occupies residues 22–43 (TRKSARRAYPPGQHGQNRKKRS). An S4 RNA-binding domain is found at 90–152 (MRLDNTVFRL…APSRKLVENN (63 aa)).

The protein belongs to the universal ribosomal protein uS4 family. Part of the 30S ribosomal subunit. Contacts protein S5. The interaction surface between S4 and S5 is involved in control of translational fidelity.

In terms of biological role, one of the primary rRNA binding proteins, it binds directly to 16S rRNA where it nucleates assembly of the body of the 30S subunit. Its function is as follows. With S5 and S12 plays an important role in translational accuracy. The polypeptide is Small ribosomal subunit protein uS4 (Nostoc sp. (strain PCC 7120 / SAG 25.82 / UTEX 2576)).